The chain runs to 1188 residues: Probable phosphoenolpyruvate synthase (1188 aa).

Positions 536 to 670 constitute a DOD-type homing endonuclease domain; the sequence is LGGAVLSDGH…LIVGLYRLGI (135 aa). Catalysis depends on H824, which acts as the Tele-phosphohistidine intermediate. R917, R964, E1061, G1083, T1084, N1085, and D1086 together coordinate substrate. E1061 serves as a coordination point for Mg(2+). Position 1086 (D1086) interacts with Mg(2+). Catalysis depends on C1133, which acts as the Proton donor.

Belongs to the PEP-utilizing enzyme family. Mg(2+) is required as a cofactor. This protein undergoes a protein self splicing that involves a post-translational excision of the intervening region (intein) followed by peptide ligation.

The catalysed reaction is pyruvate + ATP + H2O = phosphoenolpyruvate + AMP + phosphate + 2 H(+). It participates in carbohydrate biosynthesis; gluconeogenesis. Functionally, catalyzes the phosphorylation of pyruvate to phosphoenolpyruvate. The protein is Probable phosphoenolpyruvate synthase (ppsA) of Methanocaldococcus jannaschii (strain ATCC 43067 / DSM 2661 / JAL-1 / JCM 10045 / NBRC 100440) (Methanococcus jannaschii).